A 769-amino-acid polypeptide reads, in one-letter code: MLSNRAFGETIEDYEVQHLLGKGGFATVYKARCLHTHQDVAIKMIDKKLIQGTGLTSRVRQEVEIHSRLKHPSVLQLYTFFQDANYVYLVLELAHNGELHRYMNHIARPFTETEAASILKQVVAGLLYLHSHNIMHRDISLSNLLLSREMHVKIADFGLATQLKRPDERHMTMCGTPNYISPEVVSRSSHGLPADVWSVGCMLYTLLVGRPPFETDAVQSTLNKVVMSEYIMPAHLSYEAQDLINKLLKKLPHERITLEAVLCHPFMLKCSNGVHSAPGALNVFSQSMESGDSGIITFASSDSRNSQQIRSVENSGPQQVLPQIREEFKQVHHKLPYEQPGLFGQASTGLAEPNWPGAAKTSAFRMETGMVPNSKPASLKEDRISVPPLNTKRLLPTRYKTKNAIMSILRNGEVVLEFLKFRPTYNEDRINDICRISDDGQRIIIYQPDPGRGLPVREQPPDLQIPSGDCVYNYDNLPNKHWKKYIYGARFVGLVKSKTPKVTYFSTLGKCQLMETMTDFEIRFYSGAKLLKTPSEGLKVYDRNGMLLSDHSCSESRSLIEHGNECFTHCVNISNALEVAQTKDNSCFPVTIGRRPITDVQPAQRLDGLRDTTNIAFSTPKSNQGSINFSLSTISSTRNTSDFGTNCSRSNMLAAHQNIPIKRINVPDIGIATELSHGVVQVQFYDGSVVSVIPSMQGGGITYTQPNGTSTHFGKDDDLPFPVRDRVGQIPNIQLKLKTAPLLGSGRKTDYNNAMTPKTTTPYYNRMLL.

In terms of domain architecture, Protein kinase spans 14-267; that stretch reads YEVQHLLGKG…LEAVLCHPFM (254 aa). Residues 20–28 and K43 each bind ATP; that span reads LGKGGFATV. D138 functions as the Proton acceptor in the catalytic mechanism. The region spanning 381–498 is the Cryptic POLO box 1 (CPB1) domain; it reads EDRISVPPLN…ARFVGLVKSK (118 aa). Residues 499–602 enclose the Cryptic POLO box 2 (CPB2) domain; sequence TPKVTYFSTL…GRRPITDVQP (104 aa). Residues 660 to 739 form the POLO box domain; sequence PIKRINVPDI…IPNIQLKLKT (80 aa).

It belongs to the protein kinase superfamily. Ser/Thr protein kinase family. CDC5/Polo subfamily. In terms of assembly, homodimer. Ubiquitinated by the SCF(Slimb) ubiquitin ligase complex; leading to its degradation by the proteasome during interphase and regulating centriole number and ensuring the block to centriole reduplication.

Its subcellular location is the cytoplasm. It localises to the cytoskeleton. The protein resides in the microtubule organizing center. It is found in the centrosome. The protein localises to the centriole. The catalysed reaction is L-seryl-[protein] + ATP = O-phospho-L-seryl-[protein] + ADP + H(+). It carries out the reaction L-threonyl-[protein] + ATP = O-phospho-L-threonyl-[protein] + ADP + H(+). Functionally, serine/threonine-protein kinase that plays a central role in centriole duplication. Able to trigger procentriole formation on the surface of the mother centriole cylinder, using mother centriole as a platform, leading to the recruitment of centriole biogenesis proteins such as sas-6. When overexpressed, it is able to induce centrosome amplification through the simultaneous generation of multiple procentrioles adjoining each parental centriole during S phase. Centrosome amplification following overexpression can initiate tumorigenesis, highlighting the importance of centrosome regulation in cancers. In Drosophila simulans (Fruit fly), this protein is Serine/threonine-protein kinase PLK4 (SAK).